The sequence spans 88 residues: Small ribosomal subunit protein uS15 (88 aa).

The protein belongs to the universal ribosomal protein uS15 family. As to quaternary structure, part of the 30S ribosomal subunit. Forms a bridge to the 50S subunit in the 70S ribosome, contacting the 23S rRNA.

In terms of biological role, one of the primary rRNA binding proteins, it binds directly to 16S rRNA where it helps nucleate assembly of the platform of the 30S subunit by binding and bridging several RNA helices of the 16S rRNA. Forms an intersubunit bridge (bridge B4) with the 23S rRNA of the 50S subunit in the ribosome. This Geotalea uraniireducens (strain Rf4) (Geobacter uraniireducens) protein is Small ribosomal subunit protein uS15.